The following is a 123-amino-acid chain: Chondroitin proteoglycan 8 (123 aa).

A signal peptide spans 1 to 16; the sequence is MRPFILLALLFSVAIA. The tract at residues 32 to 123 is disordered; the sequence is SVRRSTRGAD…SGSGDEAPAE (92 aa). Positions 38 to 60 are enriched in basic and acidic residues; sequence RGADKKADSSDSSDSNEKDDKVT. O-linked (Xyl...) (chondroitin sulfate) serine glycosylation is found at Ser-63 and Ser-65. Basic and acidic residues predominate over residues 74-84; sequence EQLRRVARDVE. 3 O-linked (Xyl...) (chondroitin sulfate) serine glycosylation sites follow: Ser-87, Ser-93, and Ser-114.

The polypeptide is Chondroitin proteoglycan 8 (cpg-8) (Caenorhabditis briggsae).